Consider the following 1233-residue polypeptide: MNTIPSSNYLSSCPNCGRVISAERLYKGSVCSECLEEDREFNSIRELVNELSRLNKLNRLNYIKEVLREYDIFVELFKRIIGFPPFGPQKSWIIRVLRKESFAIIAPPGLGKTTFGIITSLYFSSKNFRSILIFPTRSLVKQAVDRISMYSNKTNIETKLLYYHSGINESQKQELYKALNAGDFNIFIATNRFFIDKINELKNIKYDFMFVDDVDTALKSSKSAETILNLAGFSKDDILSVKELLRKSREDESVYTKIQEIRGNKLKGKTIVFSSATLTRGNPVLSALMGFRPGSSVIYLRKIIDTYAYLPNNDDDVVNLLKELLNKLGEGGLIFVPVDKGQEYAKFLEAKLSDSFNVVTITSSNTNKIEDFANGNIYALIGSATHYGILVRGIDIPWRVKYAIFVGIPKFKFKIGEVMNLVALSRILSMIGLITKDQDIVRLAGRVRGKLRKLSPAAISMLTNQAREGKLEDETLLRAYEVVNKYLEDKDILKKIAELGDLVISNGYILMPDYLTYIQASGRTSRIYGGELTTGLSVLLIDDINLFNILNRKLSLILDEIIWQELQIKKNKIGSSDLTEIINKINEERERILKVKKEGEIEPSLQKVKTVLFIVESPNKAKTISNFFAKPSIRQLENIRAFETVLEDKILIVAATGGHVYDLTTQNIGIYGVEVQQQNSHFNFIPYYNTIKKCINGHQFTDFEQGNQCPKCHTTQIILDKTATIDALRKLALEADEILIGTDPDTEGEKIAWDIYLALKPFNSNIKRAEFHEVTRKAILQAINNPRPFNVNLVKSQIVRRIEDRWIGFKLSTKLQEDFWKEYCKNYNCKSEENKNLSAGRVQSPVLNWIVNRYDEYNANKTKIYYGSIKGIDELKFYVFKQNEKIRKNANIYVKIINTKVLEEEINPLPPYTTDTLLYDANQFYGISASETMKIAQDLFELGLITYHRTDSTRISNTGISIAEGYLKQIAGENYTKIFKPRSWGEGGAHEAIRPTRPLDVDQLRLLVDEGEIELAKKITRAHFLIYDLIFRRFITSQLVPLKVIKERIEYKICEDSNCNSELKTLQNYSEFITDIKLPIQLDYSKFLYLPTTRIIKNSIIKKLQETTGSTNAELVSKIQLTGSFVKSTVNLYTQAELVAEMKRKEIGRPSTYATIISTILKRGYVIESKKTKKLIPTQLGKEVNKYLNQKFSSFVSEERTRNLLQLMDMVEQGKQDYIQILKDIYYEIKSIR.

An RG N-terminal-type zinc finger spans residues 1-41; the sequence is MNTIPSSNYLSSCPNCGRVISAERLYKGSVCSECLEEDREF. The Zn(2+) site is built by cysteine 13, cysteine 16, cysteine 31, and cysteine 34. Residues glutamine 89 and 106-113 each bind ATP; that span reads APPGLGKT. A Helicase ATP-binding domain is found at 93-296; that stretch reads IIRVLRKESF…ALMGFRPGSS (204 aa). The DEAD box motif lies at 212–215; that stretch reads DDVD. Positions 606-1233 are topoisomerase I; it reads QKVKTVLFIV…DIYYEIKSIR (628 aa). Positions 610 to 774 constitute a Toprim domain; the sequence is TVLFIVESPN…NIKRAEFHEV (165 aa). Position 616 (glutamate 616) interacts with Mg(2+). The RG C-terminal-type; atypical zinc-finger motif lies at 691–720; that stretch reads IKKCINGHQFTDFEQGNQCPKCHTTQIILD. The Zn(2+) site is built by cysteine 694, histidine 698, cysteine 709, and cysteine 712. Mg(2+) is bound at residue aspartate 743. In terms of domain architecture, Topo IA-type catalytic spans 790 to 1233; sequence NVNLVKSQIV…DIYYEIKSIR (444 aa). Tyrosine 947 acts as the O-(5'-phospho-DNA)-tyrosine intermediate in catalysis.

It in the N-terminal section; belongs to the DEAD box helicase family. DDVD subfamily. The protein in the C-terminal section; belongs to the type IA topoisomerase family. As to quaternary structure, monomer. Zn(2+) is required as a cofactor. Mg(2+) serves as cofactor.

Its subcellular location is the cytoplasm. The enzyme catalyses ATP + H2O = ADP + phosphate + H(+). Modifies the topological state of DNA by introducing positive supercoils in an ATP-dependent process, increasing the linking number in steps of +1. Binds to single-stranded DNA, transiently cleaves and then rejoins the ends, introducing a positive supercoil in the process. The scissile phosphodiester is attacked by the catalytic tyrosine of the enzyme, resulting in the formation of a DNA-(5'-phosphotyrosyl)-enzyme intermediate. Probably involved in rewinding DNA strands in regions of the chromosome that have opened up to allow replication, transcription, DNA repair and/or for DNA protection. This chain is Reverse gyrase 2, found in Sulfurisphaera tokodaii (strain DSM 16993 / JCM 10545 / NBRC 100140 / 7) (Sulfolobus tokodaii).